The chain runs to 638 residues: Methyl-accepting chemotaxis protein McpQ (638 aa).

A helical transmembrane segment spans residues 18 to 38 (LGLGFGLVLLLTLAITLTGWH). Residues 45-282 (DRGDKLGNIS…SQTEVRDAAA (238 aa)) enclose the HBM domain. A helical transmembrane segment spans residues 287 to 307 (TLLTVATVLALALGLLAAWAI). The HAMP domain maps to 309-361 (RQIIIPLRQTLRAAERVASGDLTQSLQVQRRDELGQLQASMHRMTQGLRELIG). One can recognise a Methyl-accepting transducer domain in the interval 366–602 (GVTQIASAAE…EINRSVMNVR (237 aa)).

The protein belongs to the methyl-accepting chemotaxis (MCP) protein family.

It localises to the cell membrane. In terms of biological role, chemotactic-signal transducers respond to changes in the concentration of attractants and repellents in the environment, transduce a signal from the outside to the inside of the cell, and facilitate sensory adaptation through the variation of the level of methylation. McpQ recognizes specifically citrate and citrate/metal(2+) complexes. Binds citrate/metal(2+) complexes with higher affinity than free citrate, and mediates preferentially chemotaxis toward citrate/metal(2+) complexes. In Pseudomonas putida (strain ATCC 47054 / DSM 6125 / CFBP 8728 / NCIMB 11950 / KT2440), this protein is Methyl-accepting chemotaxis protein McpQ.